Reading from the N-terminus, the 126-residue chain is Late expression factor 11 (126 aa).

Belongs to the baculoviridae LEF-11 family.

Functionally, involved in late/very late gene activation. This is Late expression factor 11 (LEF-11) from Epiphyas postvittana nucleopolyhedrovirus (EppoMNPV).